We begin with the raw amino-acid sequence, 356 residues long: Ribosomal RNA large subunit methyltransferase M (356 aa).

S-adenosyl-L-methionine contacts are provided by residues S187, C220–G223, D239, D259, and D276. The active-site Proton acceptor is the K305.

It belongs to the class I-like SAM-binding methyltransferase superfamily. RNA methyltransferase RlmE family. RlmM subfamily. As to quaternary structure, monomer.

Its subcellular location is the cytoplasm. The enzyme catalyses cytidine(2498) in 23S rRNA + S-adenosyl-L-methionine = 2'-O-methylcytidine(2498) in 23S rRNA + S-adenosyl-L-homocysteine + H(+). Catalyzes the 2'-O-methylation at nucleotide C2498 in 23S rRNA. This Pseudoalteromonas atlantica (strain T6c / ATCC BAA-1087) protein is Ribosomal RNA large subunit methyltransferase M.